A 232-amino-acid polypeptide reads, in one-letter code: Phosphatidylserine decarboxylase proenzyme (232 aa).

Residue Ser-190 is the Schiff-base intermediate with substrate; via pyruvic acid of the active site. Ser-190 carries the post-translational modification Pyruvic acid (Ser); by autocatalysis.

Belongs to the phosphatidylserine decarboxylase family. PSD-A subfamily. Heterodimer of a large membrane-associated beta subunit and a small pyruvoyl-containing alpha subunit. Requires pyruvate as cofactor. In terms of processing, is synthesized initially as an inactive proenzyme. Formation of the active enzyme involves a self-maturation process in which the active site pyruvoyl group is generated from an internal serine residue via an autocatalytic post-translational modification. Two non-identical subunits are generated from the proenzyme in this reaction, and the pyruvate is formed at the N-terminus of the alpha chain, which is derived from the carboxyl end of the proenzyme. The post-translation cleavage follows an unusual pathway, termed non-hydrolytic serinolysis, in which the side chain hydroxyl group of the serine supplies its oxygen atom to form the C-terminus of the beta chain, while the remainder of the serine residue undergoes an oxidative deamination to produce ammonia and the pyruvoyl prosthetic group on the alpha chain.

It localises to the cell membrane. It carries out the reaction a 1,2-diacyl-sn-glycero-3-phospho-L-serine + H(+) = a 1,2-diacyl-sn-glycero-3-phosphoethanolamine + CO2. Its pathway is phospholipid metabolism; phosphatidylethanolamine biosynthesis; phosphatidylethanolamine from CDP-diacylglycerol: step 2/2. Catalyzes the formation of phosphatidylethanolamine (PtdEtn) from phosphatidylserine (PtdSer). The chain is Phosphatidylserine decarboxylase proenzyme from Methylocella silvestris (strain DSM 15510 / CIP 108128 / LMG 27833 / NCIMB 13906 / BL2).